We begin with the raw amino-acid sequence, 134 residues long: MLSPKKTKYRKQHRGRLKGACSRGNRISFGKFAIQALEPAWITSGQIEAGRRAITRTTRRGIKIWIRIFPDKPITKKPADTRMGSGKGDPKFWVAVVKPGRMLYEMGRISESVARKAAQNVAYKMCLHTRFVKI.

It belongs to the universal ribosomal protein uL16 family. In terms of assembly, part of the 50S ribosomal subunit.

Its subcellular location is the plastid. The protein resides in the chloroplast. This chain is Large ribosomal subunit protein uL16c, found in Gnetum parvifolium (Small-leaved jointfir).